The chain runs to 1871 residues: Protein RRP5 homolog (1871 aa).

A disordered region spans residues 1–62 (MANLEESFPR…KTKKLKIEKR (62 aa)). Alanine 2 carries the N-acetylalanine modification. Serine 7 is modified (phosphoserine). Residues 43-59 (KRKKSQKGPAKTKKLKI) show a composition bias toward basic residues. 4 S1 motif domains span residues 83–171 (GMRI…LSLN), 187–258 (GMLL…LSVG), 281–346 (GLVV…LSLR), and 365–436 (GAVL…LSLR). Position 438 is a phosphoserine (serine 438). S1 motif domains follow at residues 453–522 (GAVV…MTLK), 542–611 (GLQT…LSFK), 636–707 (GQLV…LCRK), and 729–798 (GMLL…LSLR). Positions 998–1018 (AAKRTMRPTQKDSETVDEDEE) are disordered. A Glycyl lysine isopeptide (Lys-Gly) (interchain with G-Cter in SUMO1) cross-link involves residue lysine 1030. S1 motif domains follow at residues 1036-1109 (GDMV…ISHP), 1149-1222 (GQTV…LSLT), 1230-1298 (GEVA…LSLR), and 1324-1396 (GQLL…LSFL). Residues serine 1360 and serine 1362 each carry the phosphoserine modification. 2 disordered regions span residues 1395 to 1531 (FLPG…APRL) and 1549 to 1586 (ALPP…KAEK). Lysine 1416 is covalently cross-linked (Glycyl lysine isopeptide (Lys-Gly) (interchain with G-Cter in SUMO2)). 2 stretches are compositionally biased toward basic and acidic residues: residues 1416 to 1459 (KQEE…EKQQ) and 1469 to 1484 (GGRE…ERVS). 3 positions are modified to phosphoserine: serine 1476, serine 1493, and serine 1498. Basic and acidic residues predominate over residues 1575–1586 (KERELEKQKAEK). HAT repeat units follow at residues 1599-1631 (GRQP…FHLQ), 1705-1737 (EKFQ…FLLR), 1775-1807 (GDAE…MTIK), and 1809-1844 (GSQK…YEKQ).

In terms of assembly, interacts with NF-kappa-B p50/NFKB1 and NF-kappa-B p65/RELA.

Its subcellular location is the nucleus. The protein resides in the nucleolus. Its function is as follows. Essential for the generation of mature 18S rRNA, specifically necessary for cleavages at sites A0, 1 and 2 of the 47S precursor. Directly interacts with U3 snoRNA. Involved in the biogenesis of rRNA. In Homo sapiens (Human), this protein is Protein RRP5 homolog (PDCD11).